The sequence spans 562 residues: Protein wntless (562 aa).

Topologically, residues 1–15 are cytoplasmic; the sequence is MSGTILENLSGRKLS. A helical membrane pass occupies residues 16-36; sequence ILVSSLMLCQVVCFLMGGLFA. Over 37–239 the chain is Lumenal; it reads PVPAGHQTVL…AIHQNGGFTQ (203 aa). N58 and N103 each carry an N-linked (GlcNAc...) asparagine glycan. The chain crosses the membrane as a helical span at residues 240-260; that stretch reads VWLVLKTLLFPFVIGIMMWFW. The Cytoplasmic portion of the chain corresponds to 261–275; the sequence is RRVHILQRSPALLEY. Residues 276–296 form a helical membrane-spanning segment; sequence MLFYLGGALSFLNLPLELLTL. Residues 297-311 are Lumenal-facing; it reads GVEMPYMLLLSDVRQ. The chain crosses the membrane as a helical span at residues 312 to 332; it reads GIFYAMLLSFWLVFAGEHMLI. Over 333-344 the chain is Cytoplasmic; sequence QDSPSKSTIRSR. The helical transmembrane segment at 345-365 threads the bilayer; the sequence is YWKHLSAVVVGCISLFVFDIC. At 366 to 390 the chain is on the lumenal side; that stretch reads ERGVQMRNPFYSIWTTPLGAKVAMS. A helical membrane pass occupies residues 391 to 411; sequence FIVLAGVSAAIYFLFLCFMVW. Topologically, residues 412–441 are cytoplasmic; the sequence is KVFKDIGDKRTSLPSMSQARRLHYEGLIYR. A helical transmembrane segment spans residues 442–462; sequence FKFLMLATLLCAGLTVAGFIM. Topologically, residues 463-482 are lumenal; it reads GQMAEGHWKWNENIEIQLTS. Residues 483–503 traverse the membrane as a helical segment; sequence AFLTGVYGMWNIYIFALIILY. The Cytoplasmic segment spans residues 504–562; it reads APSHKQWPTMRHSDETTQSNENIVASAASEEIEFSNLPSDSNPSEISSLTSFTRKVAFD.

Belongs to the wntless family. In terms of assembly, interacts with wg; in the Golgi. Interacts with Vps35, a component of the retromer complex; wls stability is regulated by Vps35.

Its subcellular location is the presynaptic cell membrane. It localises to the postsynaptic cell membrane. It is found in the cell membrane. The protein resides in the endoplasmic reticulum membrane. The protein localises to the endosome membrane. Its subcellular location is the golgi apparatus membrane. Functionally, a segment polarity gene required for wingless (wg)-dependent patterning processes, acting in both wg-sending cells and wg-target cells. In non-neuronal cells wls directs wg secretion. The wls traffic loop encompasses the Golgi, the cell surface, an endocytic compartment and a retrograde route leading back to the Golgi, and involves clathrin-mediated endocytosis and the retromer complex (a conserved protein complex consisting of Vps35 and Vps26). In neuronal cells (the larval motorneuron NMJ), the wg signal moves across the synapse via the release of wls-containing exosome-like vesicles. Postsynaptic wls is required for the trafficking of fz2 through the fz2-interacting protein Grip. The polypeptide is Protein wntless (Drosophila grimshawi (Hawaiian fruit fly)).